Reading from the N-terminus, the 242-residue chain is MTTVSMRDMLQAGVHFGHQTRYWNPKMKPFIFGARNGVHIINLEHTVPMFNEALAFISNVASKKGKVLFVGTKRAASEAIKEAAISCDQYYVDNRWLGGMLTNWKTVRQSIKRLKDLESQSVDGTFDKLTKKEALMRTRELEKLEKSLGGIKNMGGLPDVIFVIGADHEHIAIKEANNLGIPVVAVVDTNSSPDGINYIVPGNDDAMRAIRLYAESVAAAAKAGRGQDLAVQAEQDGFVEAE.

Belongs to the universal ribosomal protein uS2 family.

This Shewanella loihica (strain ATCC BAA-1088 / PV-4) protein is Small ribosomal subunit protein uS2.